The primary structure comprises 272 residues: Pyrroline-5-carboxylate reductase 3 (272 aa).

This sequence belongs to the pyrroline-5-carboxylate reductase family.

Its subcellular location is the cytoplasm. It catalyses the reaction L-proline + NADP(+) = (S)-1-pyrroline-5-carboxylate + NADPH + 2 H(+). The enzyme catalyses L-proline + NAD(+) = (S)-1-pyrroline-5-carboxylate + NADH + 2 H(+). It participates in amino-acid biosynthesis; L-proline biosynthesis; L-proline from L-glutamate 5-semialdehyde: step 1/1. Functionally, catalyzes the reduction of 1-pyrroline-5-carboxylate (PCA) to L-proline. The sequence is that of Pyrroline-5-carboxylate reductase 3 (proG) from Bacillus subtilis (strain 168).